The sequence spans 293 residues: Acetyl-coenzyme A carboxylase carboxyl transferase subunit beta (293 aa).

Positions 29-293 (LWSKCPECGQ…GCKPMELTSA (265 aa)) constitute a CoA carboxyltransferase N-terminal domain. Positions 33, 36, 52, and 55 each coordinate Zn(2+). The C4-type zinc-finger motif lies at 33-55 (CPECGQVVYLKDLKLNASVCANC).

Belongs to the AccD/PCCB family. Acetyl-CoA carboxylase is a heterohexamer composed of biotin carboxyl carrier protein (AccB), biotin carboxylase (AccC) and two subunits each of ACCase subunit alpha (AccA) and ACCase subunit beta (AccD). Requires Zn(2+) as cofactor.

The protein resides in the cytoplasm. The enzyme catalyses N(6)-carboxybiotinyl-L-lysyl-[protein] + acetyl-CoA = N(6)-biotinyl-L-lysyl-[protein] + malonyl-CoA. The protein operates within lipid metabolism; malonyl-CoA biosynthesis; malonyl-CoA from acetyl-CoA: step 1/1. Component of the acetyl coenzyme A carboxylase (ACC) complex. Biotin carboxylase (BC) catalyzes the carboxylation of biotin on its carrier protein (BCCP) and then the CO(2) group is transferred by the transcarboxylase to acetyl-CoA to form malonyl-CoA. The sequence is that of Acetyl-coenzyme A carboxylase carboxyl transferase subunit beta from Synechococcus sp. (strain CC9605).